An 84-amino-acid polypeptide reads, in one-letter code: Anthracycline acyl carrier protein DpsG (84 aa).

Residues 3 to 80 (ELSLAELREI…SMLIFVNERL (78 aa)) enclose the Carrier domain. Residue Ser-40 is modified to O-(pantetheine 4'-phosphoryl)serine.

Its pathway is antibiotic biosynthesis; daunorubicin biosynthesis. It functions in the pathway antibiotic biosynthesis; carminomycin biosynthesis. It participates in antibiotic biosynthesis; rhodomycin biosynthesis. The protein operates within antibiotic biosynthesis; aclacinomycin biosynthesis. Its function is as follows. Involved in the biosynthesis of aklanonate which is an important precursor common to the formation of the clinically significant anthracyclines such as carminomycin, daunorubicin (daunomycin), rhodomycin, aclacinomycin T (aklavin) and aclacinomycin A (aclarubicin). These compounds are aromatic polyketide antibiotics that exhibit high cytotoxicity and are widely applied in the chemotherapy of a variety of cancers. The sequence is that of Anthracycline acyl carrier protein DpsG (dpsG) from Streptomyces peucetius.